Here is a 360-residue protein sequence, read N- to C-terminus: AA9 family lytic polysaccharide monooxygenase A (360 aa).

The first 19 residues, 1-19 (MKTSFGLLALAAAAKLVNA), serve as a signal peptide directing secretion. Residues His-20 and His-102 each contribute to the Cu(2+) site. Cys-62 and Cys-183 are joined by a disulfide. An O2-binding site is contributed by His-169. Tyr-180 is a binding site for Cu(2+). Positions 254–293 (TSAASASSTKAPATTAAPVQTESAKPATSTTQAAAPTTLV) are disordered. Residues 322–358 (GVVKMYAQCGGMNYSGSTTCESGLTCKQWNPYYHQCV) enclose the CBM1 domain. N-linked (GlcNAc...) asparagine glycosylation occurs at Asn-334.

The protein belongs to the polysaccharide monooxygenase AA9 family. The cofactor is Cu(2+).

The protein localises to the secreted. It catalyses the reaction [(1-&gt;4)-beta-D-glucosyl]n+m + reduced acceptor + O2 = 4-dehydro-beta-D-glucosyl-[(1-&gt;4)-beta-D-glucosyl]n-1 + [(1-&gt;4)-beta-D-glucosyl]m + acceptor + H2O.. Functionally, lytic polysaccharide monooxygenase (LPMO) that depolymerizes crystalline and amorphous polysaccharides via the oxidation of scissile alpha- or beta-(1-4)-glycosidic bonds, yielding C4 oxidation products. Catalysis by LPMOs requires the reduction of the active-site copper from Cu(II) to Cu(I) by a reducing agent and H(2)O(2) or O(2) as a cosubstrate. The sequence is that of AA9 family lytic polysaccharide monooxygenase A (eglD) from Aspergillus terreus (strain NIH 2624 / FGSC A1156).